The following is a 605-amino-acid chain: Elongation factor 4 (605 aa).

The region spanning 8–190 (RRVRNFCIVA…AIITRIPPPQ (183 aa)) is the tr-type G domain. GTP is bound by residues 20–25 (DHGKST) and 137–140 (NKID).

The protein belongs to the TRAFAC class translation factor GTPase superfamily. Classic translation factor GTPase family. LepA subfamily.

It localises to the cell inner membrane. It carries out the reaction GTP + H2O = GDP + phosphate + H(+). Its function is as follows. Required for accurate and efficient protein synthesis under certain stress conditions. May act as a fidelity factor of the translation reaction, by catalyzing a one-codon backward translocation of tRNAs on improperly translocated ribosomes. Back-translocation proceeds from a post-translocation (POST) complex to a pre-translocation (PRE) complex, thus giving elongation factor G a second chance to translocate the tRNAs correctly. Binds to ribosomes in a GTP-dependent manner. This chain is Elongation factor 4, found in Treponema pallidum (strain Nichols).